We begin with the raw amino-acid sequence, 65 residues long: Large ribosomal subunit protein bL35 (65 aa).

The protein belongs to the bacterial ribosomal protein bL35 family.

The protein is Large ribosomal subunit protein bL35 of Prochlorococcus marinus subsp. pastoris (strain CCMP1986 / NIES-2087 / MED4).